Reading from the N-terminus, the 483-residue chain is MORN repeat-containing protein 1 (483 aa).

The residue at position 18 (serine 18) is a Phosphoserine. MORN repeat units follow at residues 39–61, 62–84, 86–108, 109–131, 132–154, 155–177, and 178–200; these read YEGE…DGSY, YEGE…WSGN, YSGQ…AGGH, YEGE…DGQV, YQGS…NGDK, YEGD…DGST, and YKGQ…SGVT. Residues 392-427 form a disordered region; it reads EKAGNRPKGDRSPPEVLSTAQEPLRGTNRSDGTTAE. Residues 394–404 are compositionally biased toward basic and acidic residues; the sequence is AGNRPKGDRSP. Phosphoserine is present on serine 403. Polar residues predominate over residues 418-427; that stretch reads TNRSDGTTAE.

The sequence is that of MORN repeat-containing protein 1 (Morn1) from Rattus norvegicus (Rat).